We begin with the raw amino-acid sequence, 76 residues long: uncharacterized protein (76 aa).

This is an uncharacterized protein from Magallana gigas (Pacific oyster).